Here is a 147-residue protein sequence, read N- to C-terminus: Small ribosomal subunit protein bS6 (147 aa).

The segment covering 97 to 141 has biased composition (basic and acidic residues); it reads EEGPSAMMRKADRDRERDDRGGGFRGDREGGFRGDRGPRRPREEA. The tract at residues 97 to 147 is disordered; the sequence is EEGPSAMMRKADRDRERDDRGGGFRGDREGGFRGDRGPRRPREEAPAVVEE.

The protein belongs to the bacterial ribosomal protein bS6 family.

In terms of biological role, binds together with bS18 to 16S ribosomal RNA. This Nitrobacter hamburgensis (strain DSM 10229 / NCIMB 13809 / X14) protein is Small ribosomal subunit protein bS6.